The sequence spans 309 residues: Protoheme IX farnesyltransferase (309 aa).

A run of 9 helical transmembrane segments spans residues 35–55, 64–84, 114–134, 135–155, 161–181, 187–207, 231–251, 253–273, and 289–309; these read IGIV…AFYF, LHLV…SCAI, VLWL…MTTV, TAAV…TLWT, INTV…WTAV, IVPL…FLAL, MTKR…FYLF, LGVP…LLGL, and FVYS…ATLW.

Belongs to the UbiA prenyltransferase family. Protoheme IX farnesyltransferase subfamily. In terms of assembly, interacts with CtaA.

The protein localises to the cell membrane. The enzyme catalyses heme b + (2E,6E)-farnesyl diphosphate + H2O = Fe(II)-heme o + diphosphate. The protein operates within porphyrin-containing compound metabolism; heme O biosynthesis; heme O from protoheme: step 1/1. Its function is as follows. Converts heme B (protoheme IX) to heme O by substitution of the vinyl group on carbon 2 of heme B porphyrin ring with a hydroxyethyl farnesyl side group. This chain is Protoheme IX farnesyltransferase, found in Geobacillus kaustophilus (strain HTA426).